The primary structure comprises 240 residues: DNA repair protein RecO (240 aa).

Belongs to the RecO family.

Functionally, involved in DNA repair and RecF pathway recombination. The protein is DNA repair protein RecO of Actinobacillus pleuropneumoniae serotype 7 (strain AP76).